We begin with the raw amino-acid sequence, 305 residues long: Oxygen-dependent coproporphyrinogen-III oxidase (305 aa).

Serine 98 is a binding site for substrate. Residues histidine 102 and histidine 112 each coordinate a divalent metal cation. The Proton donor role is filled by histidine 112. 114–116 (NVR) contributes to the substrate binding site. Residues histidine 151 and histidine 181 each contribute to the a divalent metal cation site. Positions 246–281 (YVEFNLVYDRGTLFGLQSGGRTESILMSMPPLARWE) are important for dimerization. 264–266 (GGR) is a substrate binding site.

It belongs to the aerobic coproporphyrinogen-III oxidase family. Homodimer. The cofactor is a divalent metal cation.

Its subcellular location is the cytoplasm. It carries out the reaction coproporphyrinogen III + O2 + 2 H(+) = protoporphyrinogen IX + 2 CO2 + 2 H2O. The protein operates within porphyrin-containing compound metabolism; protoporphyrin-IX biosynthesis; protoporphyrinogen-IX from coproporphyrinogen-III (O2 route): step 1/1. Functionally, involved in the heme biosynthesis. Catalyzes the aerobic oxidative decarboxylation of propionate groups of rings A and B of coproporphyrinogen-III to yield the vinyl groups in protoporphyrinogen-IX. The sequence is that of Oxygen-dependent coproporphyrinogen-III oxidase from Vibrio vulnificus (strain CMCP6).